Reading from the N-terminus, the 489-residue chain is Glucose-1-phosphate adenylyltransferase small subunit, chloroplastic/amyloplastic (489 aa).

The N-terminal 52 residues, 1–52 (ITVPSTSSKNLQNSLAFSSSSLSGDKIQTTSFLNRRYCRISSRAPIVVSPKA), are a transit peptide targeting the chloroplast.

This sequence belongs to the bacterial/plant glucose-1-phosphate adenylyltransferase family. As to quaternary structure, heterotetramer. In terms of tissue distribution, prominently expressed in the leaves. A lower level expression is seen in the roots.

The protein resides in the plastid. It is found in the chloroplast. It localises to the amyloplast. It carries out the reaction alpha-D-glucose 1-phosphate + ATP + H(+) = ADP-alpha-D-glucose + diphosphate. The protein operates within glycan biosynthesis; starch biosynthesis. Its activity is regulated as follows. Activated by 3'phosphoglycerate, inhibited by orthophosphate. Allosteric regulation. In terms of biological role, this protein plays a role in synthesis of starch. It catalyzes the synthesis of the activated glycosyl donor, ADP-glucose from Glc-1-P and ATP. The protein is Glucose-1-phosphate adenylyltransferase small subunit, chloroplastic/amyloplastic (AGPB1) of Beta vulgaris (Sugar beet).